Here is a 314-residue protein sequence, read N- to C-terminus: Olfactory receptor 52K2 (314 aa).

Residues 1–27 (MSASNITLTHPTAFLLVGIPGLEHLHI) are Extracellular-facing. N-linked (GlcNAc...) asparagine glycosylation is present at asparagine 5. Residues 28–48 (WISIPFCLAYTLALLGNCTLL) form a helical membrane-spanning segment. The Cytoplasmic portion of the chain corresponds to 49–56 (LIIQADAA). The chain crosses the membrane as a helical span at residues 57 to 77 (LHEPMYLFLAMLAAIDLVLSS). At 78–101 (SALPKMLAIFWFRDREINFFACLA) the chain is on the extracellular side. A disulfide bridge links cysteine 99 with cysteine 191. The chain crosses the membrane as a helical span at residues 102–122 (QMFFLHSFSIMESAVLLAMAF). At 123 to 141 (DRYVAICKPLHYTKVLTGS) the chain is on the cytoplasmic side. Residues 142-162 (LITKIGMAAVARAVTLMTPLP) form a helical membrane-spanning segment. Residues 163–198 (FLLRCFHYCRGPVIAHCYCEHMAVVRLACGDTSFNN) lie on the Extracellular side of the membrane. Residues 199-219 (IYGIAVAMFIVVLDLLLVILS) traverse the membrane as a helical segment. Topologically, residues 220 to 239 (YIFILQAVLLLASQEARYKA) are cytoplasmic. The helical transmembrane segment at 240–260 (FGTCVSHIGAILAFYTTVVIS) threads the bilayer. At 261–275 (SVMHRVARHAAPHVH) the chain is on the extracellular side. A helical transmembrane segment spans residues 276–296 (ILLANFYLLFPPMVNPIIYGV). Topologically, residues 297–314 (KTKQIRESILGVFPRKDM) are cytoplasmic.

It belongs to the G-protein coupled receptor 1 family.

The protein resides in the cell membrane. Odorant receptor. The protein is Olfactory receptor 52K2 (OR52K2) of Homo sapiens (Human).